A 90-amino-acid polypeptide reads, in one-letter code: Keratin-associated protein 19-1 (90 aa).

The segment at 5–84 (GSYYGGLGYS…CCRPSYNGGY (80 aa)) is 26 X 2 AA repeats of G-[YCGS].

The protein belongs to the KRTAP type 19 family. Interacts with hair keratins. Detected in the upper portion of the hair cortex.

In terms of biological role, in the hair cortex, hair keratin intermediate filaments are embedded in an interfilamentous matrix, consisting of hair keratin-associated proteins (KRTAP), which are essential for the formation of a rigid and resistant hair shaft through their extensive disulfide bond cross-linking with abundant cysteine residues of hair keratins. The matrix proteins include the high-sulfur and high-glycine-tyrosine keratins. The sequence is that of Keratin-associated protein 19-1 (KRTAP19-1) from Homo sapiens (Human).